A 169-amino-acid chain; its full sequence is Protein AIG2 B (169 aa).

15–20 contributes to the substrate binding site; it reads YGSFQE. Glutamate 83 serves as the catalytic Proton acceptor.

The protein belongs to the gamma-glutamylcyclotransferase family. In terms of tissue distribution, expressed in roots, leaves and stems.

Its function is as follows. Putative gamma-glutamylcyclotransferase. The polypeptide is Protein AIG2 B (Arabidopsis thaliana (Mouse-ear cress)).